The sequence spans 375 residues: E3 ubiquitin-protein ligase RNF34 (375 aa).

The segment at 56–107 (EGPNIVCKACGLSFSVFRKKHVCCDCKKDFCSVCSVLQENLRRCSTCHLLQE) adopts an FYVE-type zinc-finger fold. Residues 115–134 (LMRLKVKDLRQYLILRNIPI) form the SAP 1 domain. Ser169 is subject to Phosphoserine. Residues 202–250 (RTLGSGALAQEPSEIASANTEDDEDDDDDDDDDDDDDEENLEDRTPGLT) form a disordered region. The segment covering 221–242 (TEDDEDDDDDDDDDDDDDEENL) has biased composition (acidic residues). Ser257 and Ser259 each carry phosphoserine. Residues 267 to 281 (VEGMSVRQLKEILAR) enclose the SAP 2 domain. The RING-type zinc-finger motif lies at 328-363 (CRICMDAVIDCVLLECGHMVTCTKCGKRMSECPICR).

Interacts with CASP8 and CASP10. Interacts with p53/TP53; involved in p53/TP53 ubiquitination. Interacts (via RING-type zinc finger) with MDM2; the interaction stabilizes MDM2. Interacts (via RING-type zinc finger) with PPARGC1A. Interacts with NOD1. In terms of processing, autoubiquitinated (in vitro). Post-translationally, proteolytically cleaved by caspases upon induction of apoptosis by TNF.

The protein resides in the cell membrane. The protein localises to the endomembrane system. It is found in the nucleus. Its subcellular location is the nucleus speckle. It localises to the cytoplasm. The protein resides in the cytosol. The enzyme catalyses S-ubiquitinyl-[E2 ubiquitin-conjugating enzyme]-L-cysteine + [acceptor protein]-L-lysine = [E2 ubiquitin-conjugating enzyme]-L-cysteine + N(6)-ubiquitinyl-[acceptor protein]-L-lysine.. It functions in the pathway protein modification; protein ubiquitination. Its function is as follows. E3 ubiquitin-protein ligase that regulates several biological processes through the ubiquitin-mediated proteasomal degradation of various target proteins. Ubiquitinates the caspases CASP8 and CASP10, promoting their proteasomal degradation, to negatively regulate cell death downstream of death domain receptors in the extrinsic pathway of apoptosis. May mediate 'Lys-48'-linked polyubiquitination of RIPK1 and its subsequent proteasomal degradation thereby indirectly regulating the tumor necrosis factor-mediated signaling pathway. Negatively regulates p53/TP53 through its direct ubiquitination and targeting to proteasomal degradation. Indirectly, may also negatively regulate p53/TP53 through ubiquitination and degradation of SFN. Mediates PPARGC1A proteasomal degradation probably through ubiquitination thereby indirectly regulating the metabolism of brown fat cells. Possibly involved in innate immunity, through 'Lys-48'-linked polyubiquitination of NOD1 and its subsequent proteasomal degradation. The chain is E3 ubiquitin-protein ligase RNF34 (RNF34) from Bos taurus (Bovine).